A 153-amino-acid polypeptide reads, in one-letter code: Ribosome maturation factor RimP (153 aa).

This sequence belongs to the RimP family.

It is found in the cytoplasm. In terms of biological role, required for maturation of 30S ribosomal subunits. In Marinobacter nauticus (strain ATCC 700491 / DSM 11845 / VT8) (Marinobacter aquaeolei), this protein is Ribosome maturation factor RimP.